Consider the following 1135-residue polypeptide: Glutamate receptor ionotropic, NMDA 3A (1135 aa).

The signal sequence occupies residues 1–23; sequence MRRLSLWWLLSRVCLLLPPPCAL. Topologically, residues 24–674 are extracellular; it reads VLAGVPSSSS…PIGAFMWPLH (651 aa). The disordered stretch occupies residues 60–117; that stretch reads TAPRAASRAQEGGRAGAQRDDPESGTWRPPAPSQGARWLGSALHGRGPPGSRKLGEGA. N-linked (GlcNAc...) asparagine glycans are attached at residues N145, N264, N275, N285, N296, N300, N426, N439, N549, and N565. Intrachain disulfides connect C537–C575 and C543–C576. S631, S633, and R638 together coordinate glycine. D-serine-binding residues include S633 and R638. A helical transmembrane segment spans residues 675–694; that stretch reads WTMWLGIFVALHITAIFLTL. Over 695–715 the chain is Cytoplasmic; that stretch reads YEWKSPFGMTPKGRNRNKVFS. Positions 716–727 form an intramembrane region, discontinuously helical; the sequence is FSSALNVCYALL. Residues 728–741 lie on the Cytoplasmic side of the membrane; the sequence is FGRTAAIKPPKCWT. A helical membrane pass occupies residues 742-761; that stretch reads GRFLMNLWAIFCMFCLSTYT. Over 762–932 the chain is Extracellular; that stretch reads ANLAAVMVGE…TLQMGIKHFS (171 aa). S801 is a glycine binding site. Residues S801, A802, and D845 each contribute to the D-serine site. D845 lines the glycine pocket. A disulfide bridge connects residues C859 and C913. Residue N886 is glycosylated (N-linked (GlcNAc...) asparagine). Residues 933–948 form a helical membrane-spanning segment; the sequence is GLFVLLCIGFGLSILT. The Cytoplasmic portion of the chain corresponds to 949 to 1135; that stretch reads TIGEHIVHRL…YQKTNRTCES (187 aa). The tract at residues 951 to 987 is PPP2CB binding site; that stretch reads GEHIVHRLLLPRIKNKSKLQYWLHTSQRFHRALNTSF. The stretch at 1080–1129 forms a coiled coil; it reads TTNGKADSLNVTRSSVIQELSELEKQIQVIRQELQLAVSRKTELEEYQKT. The segment at 1082-1115 is GIT1-binding; the sequence is NGKADSLNVTRSSVIQELSELEKQIQVIRQELQL.

It belongs to the glutamate-gated ion channel (TC 1.A.10.1) family. NR3A/GRIN3A subfamily. Heterotetramer. Forms heterotetrameric channels composed of two GluN1/zeta subunits (GRIN1), and two identical GluN3 subunits (GRIN3A or GRIN3B) (in vitro). Can also form heterotetrameric channels that contain at least two GluN1 subunits and at least a combination of one GluN2 and one GluN3 subunits (in vitro). Does not form functional homomeric channels. Found in a complex with GRIN1, GRIN2A or GRIN2B and PPP2CB. Probably interacts with PPP2CB. No complex with PPP2CB is detected when NMDARs are stimulated by NMDA. Interacts (via C-terminus) with GIT1, but not with GRIA1/GluA1, nor with synaptophysin/SYP; this interaction competes with GIT1 interaction with ARHGEF7/beta-PIX. Post-translationally, N-glycosylated. As to expression, isoform 1 and isoform 2 are expressed in olfactory bulb, frontal occipital, entorhinal and pyriform cortices, hippocampus, striatum, thalamus, cerebellum and spinal cord.

The protein localises to the cell membrane. It localises to the postsynaptic cell membrane. Its subcellular location is the postsynaptic density. The enzyme catalyses Ca(2+)(in) = Ca(2+)(out). The catalysed reaction is Na(+)(in) = Na(+)(out). With respect to regulation, excitatory glycine receptors are inhibited by D-serine at a concentrion of 10uM. In terms of biological role, component of a non-conventional N-methyl-D-aspartate (NMDA) receptors (NMDARs) that function as heterotetrameric, ligand-gated cation channels with low calcium permeability and low voltage-dependent block by Mg(2+). During the development of neural circuits, participates in the synaptic refinement period, restricting spine maturation and growth. Forms glutamatergic receptor complexes with GluN1 and GluN2 subunits which are activated by glycine binding to the GluN1 and GluN3 subunits and L-glutamate binding to GluN2 subunits. Forms excitatory glycinergic receptor complexes with GluN1 alone which are activated by glycine binding to the GluN1 and GluN3 subunits. GluN3A subunit also binds D-serine. Each GluN3 subunit confers differential attributes to channel properties, including activation, deactivation and desensitization kinetics, pH sensitivity, Ca2(+) permeability, and binding to allosteric modulators. By competing with GIT1 interaction with ARHGEF7/beta-PIX, may reduce GIT1/ARHGEF7-regulated local activation of RAC1, hence affecting signaling and limiting the maturation and growth of inactive synapses. The sequence is that of Glutamate receptor ionotropic, NMDA 3A from Rattus norvegicus (Rat).